The following is a 306-amino-acid chain: Curved DNA-binding protein (306 aa).

The 65-residue stretch at 5–69 (DYYAIMGVKP…QRRAEYDQMW (65 aa)) folds into the J domain.

Its subcellular location is the cytoplasm. It is found in the nucleoid. Functionally, DNA-binding protein that preferentially recognizes a curved DNA sequence. It is probably a functional analog of DnaJ; displays overlapping activities with DnaJ, but functions under different conditions, probably acting as a molecular chaperone in an adaptive response to environmental stresses other than heat shock. Lacks autonomous chaperone activity; binds native substrates and targets them for recognition by DnaK. Its activity is inhibited by the binding of CbpM. The chain is Curved DNA-binding protein from Escherichia coli O127:H6 (strain E2348/69 / EPEC).